The chain runs to 425 residues: Serine--tRNA ligase (425 aa).

Position 231 to 233 (231 to 233) interacts with L-serine; sequence TAE. Residues 262 to 264 and Val-278 each bind ATP; that span reads RTE. Position 285 (Glu-285) interacts with L-serine. 349-352 is an ATP binding site; that stretch reads EVTS. An L-serine-binding site is contributed by Thr-384.

Belongs to the class-II aminoacyl-tRNA synthetase family. Type-1 seryl-tRNA synthetase subfamily. In terms of assembly, homodimer. The tRNA molecule binds across the dimer.

It is found in the cytoplasm. The catalysed reaction is tRNA(Ser) + L-serine + ATP = L-seryl-tRNA(Ser) + AMP + diphosphate + H(+). The enzyme catalyses tRNA(Sec) + L-serine + ATP = L-seryl-tRNA(Sec) + AMP + diphosphate + H(+). Its pathway is aminoacyl-tRNA biosynthesis; selenocysteinyl-tRNA(Sec) biosynthesis; L-seryl-tRNA(Sec) from L-serine and tRNA(Sec): step 1/1. Catalyzes the attachment of serine to tRNA(Ser). Is also able to aminoacylate tRNA(Sec) with serine, to form the misacylated tRNA L-seryl-tRNA(Sec), which will be further converted into selenocysteinyl-tRNA(Sec). The sequence is that of Serine--tRNA ligase from Dictyoglomus turgidum (strain DSM 6724 / Z-1310).